The following is a 223-amino-acid chain: Thymidylate kinase (223 aa).

Residue Gly7 to Ser14 coordinates ATP.

The protein belongs to the thymidylate kinase family.

It catalyses the reaction dTMP + ATP = dTDP + ADP. Functionally, phosphorylation of dTMP to form dTDP in both de novo and salvage pathways of dTTP synthesis. The polypeptide is Thymidylate kinase (Prosthecochloris aestuarii (strain DSM 271 / SK 413)).